Consider the following 649-residue polypeptide: MAQYGHPSPLGMAAREELYSKVTPRRNRQQRPGTIKHGSALDVLLSMGFPRARAQKALASTGGRSVQAACDWLFSHVGDPFLDDPLPREYVLYLRPTGPLAQKLSDFWQQSKQICGKNKAHNIFPHITLCQFFMCEDSKVDALGEALQTTVSRWKCKFSAPLPLELYTSSNFIGLFVKEDSAEVLKKFAADFAAEAASKTEVHVEPHKKQLHVTLAYHFQASHLPTLEKLAQNIDVKLGCDWVATIFSRDIRFANHETLQVIYPYTPQNDDELELVPGDFIFMSPMEQTSTSEGWIYGTSLTTGCSGLLPENYITKADECSTWIFHGSYSILNTSSSNSLTFGDGVLERRPYEDQGLGETTPLTIICQPMQPLRVNSQPGPQKRCLFVCRHGERMDVVFGKYWLSQCFDAKGRYIRTNLNMPHSLPQRSGGFRDYEKDAPITVFGCMQARLVGEALLESNTIIDHVYCSPSLRCVQTAHNILKGLQQENHLKIRVEPGLFEWTKWVAGSTLPAWIPPSELAAANLSVDTTYRPHIPISKLVVSESYDTYISRSFQVTKEIISECKSKGNNILIVAHASSLEACTCQLQGLSPQNSKDFVQMVRKIPYLGFCSCEELGETGIWQLTDPPILPLTHGPTGGFNWRETLLQE.

Ser-20 carries the post-translational modification Phosphoserine. Residue Thr-23 is modified to Phosphothreonine. The UBA domain occupies Asn-27 to His-76. One can recognise an SH3 domain in the interval Ala-254–Glu-319. A protein tyrosine phosphatase region spans residues Gly-380–Glu-649. Arg-390 is a catalytic residue. The active-site Tele-phosphohistidine intermediate is His-391. Residue His-576 is part of the active site.

Homodimer. Interacts with JAK2 (in vitro). Interacts with CBL. Part of a complex containing CBL and activated EGFR. Interacts with ubiquitin and with mono-ubiquitinated proteins. Interacts with ZAP70 (ubiquitinated form).

Its subcellular location is the cytoplasm. It localises to the nucleus. The enzyme catalyses O-phospho-L-tyrosyl-[protein] + H2O = L-tyrosyl-[protein] + phosphate. Interferes with CBL-mediated down-regulation and degradation of receptor-type tyrosine kinases. Promotes accumulation of activated target receptors, such as T-cell receptors and EGFR, on the cell surface. Exhibits tyrosine phosphatase activity toward several substrates including EGFR, FAK, SYK, and ZAP70. Down-regulates proteins that are dually modified by both protein tyrosine phosphorylation and ubiquitination. The sequence is that of Ubiquitin-associated and SH3 domain-containing protein B (UBASH3B) from Homo sapiens (Human).